A 297-amino-acid chain; its full sequence is Cyclin-dependent kinase 1 (297 aa).

In terms of domain architecture, Protein kinase spans 4–293 (YQKVEKIGEG…AKRALQQNYL (290 aa)). Residues 10–18 (IGEGTYGVV) and K33 contribute to the ATP site. Position 14 is a phosphothreonine (T14). Y15 carries the post-translational modification Phosphotyrosine. D134 (proton acceptor) is an active-site residue. T167 is subject to Phosphothreonine.

It belongs to the protein kinase superfamily. CMGC Ser/Thr protein kinase family. CDC2/CDKX subfamily. In terms of assembly, forms a stable but non-covalent complex with regulatory subunit suc1 and with a cyclin. Interacts with cyclin cdc13. Interacts with cyclin cig2. Interacts with cdc37.

The protein resides in the cytoplasm. The enzyme catalyses L-seryl-[protein] + ATP = O-phospho-L-seryl-[protein] + ADP + H(+). The catalysed reaction is L-threonyl-[protein] + ATP = O-phospho-L-threonyl-[protein] + ADP + H(+). Its activity is regulated as follows. Phosphorylation at Thr-14 or Tyr-15 inactivates the enzyme, while phosphorylation at Thr-167 activates it. Cyclin-dependent kinase that acts as a master regulator of the mitotic and meiotic cell cycles. Required to drive the G1-S and G2-M transitions, and initiation of premeiotic DNA replication and meiosis II. More than 200 substrates have been identified. Substrate specificity is in part regulated by the bound cyclin protein. When complexed with cyclin cig2, it drives the G1-S phase transition. When complexed with cyclin cdc13, it drives the G2-M transition and initiation of meiosis II. Its activity rises throughout the cell cycle and substrate specificity is further influenced by activity thresholds with more sensitive substrates phosphorylated earlier in the cell cycle than less sensitive substrates. Phosphorylates dis1 during metaphase to ensure proper microtubule dynamics and accurate chromosome segregation. Phosphorylates the repetitive C-terminus of the large subunit of RNA polymerase II rpb1. Inactivated by checkpoint signaling following detection of cellular damage, leading to cell cycle arrest to allow damage repair. Inactivated during G2 DNA damage checkpoint signaling. Inactivated in response to defective RNA splicing. The chain is Cyclin-dependent kinase 1 from Schizosaccharomyces pombe (strain 972 / ATCC 24843) (Fission yeast).